We begin with the raw amino-acid sequence, 229 residues long: Cytochrome c oxidase subunit 2 (229 aa).

Over 1–26 the chain is Mitochondrial intermembrane; that stretch reads MSTWANLGLQDSASPLMEQLIFFHDH. A helical membrane pass occupies residues 27–48; it reads ALLILVMITVLVGYLMFMLFFN. The Mitochondrial matrix segment spans residues 49–62; sequence SYVNRFLLHGQLIE. A helical transmembrane segment spans residues 63–82; that stretch reads MIWTILPAIILLFIAMPSLR. The Mitochondrial intermembrane portion of the chain corresponds to 83 to 229; the sequence is LLYLLDEINE…IKWISNSVNS (147 aa). The Cu cation site is built by His161, Cys196, Glu198, Cys200, His204, and Met207. Glu198 is a Mg(2+) binding site.

Belongs to the cytochrome c oxidase subunit 2 family. In terms of assembly, component of the cytochrome c oxidase (complex IV, CIV), a multisubunit enzyme composed of a catalytic core of 3 subunits and several supernumerary subunits. The complex exists as a monomer or a dimer and forms supercomplexes (SCs) in the inner mitochondrial membrane with ubiquinol-cytochrome c oxidoreductase (cytochrome b-c1 complex, complex III, CIII). Cu cation is required as a cofactor.

Its subcellular location is the mitochondrion inner membrane. It catalyses the reaction 4 Fe(II)-[cytochrome c] + O2 + 8 H(+)(in) = 4 Fe(III)-[cytochrome c] + 2 H2O + 4 H(+)(out). Its function is as follows. Component of the cytochrome c oxidase, the last enzyme in the mitochondrial electron transport chain which drives oxidative phosphorylation. The respiratory chain contains 3 multisubunit complexes succinate dehydrogenase (complex II, CII), ubiquinol-cytochrome c oxidoreductase (cytochrome b-c1 complex, complex III, CIII) and cytochrome c oxidase (complex IV, CIV), that cooperate to transfer electrons derived from NADH and succinate to molecular oxygen, creating an electrochemical gradient over the inner membrane that drives transmembrane transport and the ATP synthase. Cytochrome c oxidase is the component of the respiratory chain that catalyzes the reduction of oxygen to water. Electrons originating from reduced cytochrome c in the intermembrane space (IMS) are transferred via the dinuclear copper A center (CU(A)) of subunit 2 and heme A of subunit 1 to the active site in subunit 1, a binuclear center (BNC) formed by heme A3 and copper B (CU(B)). The BNC reduces molecular oxygen to 2 water molecules using 4 electrons from cytochrome c in the IMS and 4 protons from the mitochondrial matrix. This chain is Cytochrome c oxidase subunit 2 (mt:CoII), found in Drosophila miranda (Fruit fly).